Here is a 166-residue protein sequence, read N- to C-terminus: Seed allergenic protein RAG2 (166 aa).

A signal peptide spans 1-26 (MASNKVVFSALLLIIVSVLAATATMA). Intrachain disulfides connect C41/C93, C55/C81, C63/C125, C82/C141, and C95/C153. N147 carries N-linked (GlcNAc...) asparagine glycosylation.

The protein belongs to the cereal trypsin/alpha-amylase inhibitor family. Post-translationally, five disulfide bonds are present.

It localises to the secreted. Functionally, seed storage protein. This Oryza sativa subsp. japonica (Rice) protein is Seed allergenic protein RAG2 (RAG2).